A 333-amino-acid chain; its full sequence is Flap endonuclease 1 (333 aa).

The segment at 1–99 (MGVAIRDILA…ETINERREHR (99 aa)) is N-domain. D28, D81, E153, E155, D174, D176, and D235 together coordinate Mg(2+). The interval 117–255 (EAYKQASASA…KTALKIVRNG (139 aa)) is I-domain. Positions 325–333 (TQKTLDAWF) are interaction with PCNA.

Belongs to the XPG/RAD2 endonuclease family. FEN1 subfamily. In terms of assembly, interacts with PCNA. PCNA stimulates the nuclease activity without altering cleavage specificity. Mg(2+) is required as a cofactor.

Functionally, structure-specific nuclease with 5'-flap endonuclease and 5'-3' exonuclease activities involved in DNA replication and repair. During DNA replication, cleaves the 5'-overhanging flap structure that is generated by displacement synthesis when DNA polymerase encounters the 5'-end of a downstream Okazaki fragment. Binds the unpaired 3'-DNA end and kinks the DNA to facilitate 5' cleavage specificity. Cleaves one nucleotide into the double-stranded DNA from the junction in flap DNA, leaving a nick for ligation. Also involved in the base excision repair (BER) pathway. Acts as a genome stabilization factor that prevents flaps from equilibrating into structures that lead to duplications and deletions. Also possesses 5'-3' exonuclease activity on nicked or gapped double-stranded DNA. This Methanoculleus marisnigri (strain ATCC 35101 / DSM 1498 / JR1) protein is Flap endonuclease 1.